The primary structure comprises 123 residues: Large ribosomal subunit protein uL18 (123 aa).

It belongs to the universal ribosomal protein uL18 family. In terms of assembly, part of the 50S ribosomal subunit; part of the 5S rRNA/L5/L18/L25 subcomplex. Contacts the 5S and 23S rRNAs.

Its function is as follows. This is one of the proteins that bind and probably mediate the attachment of the 5S RNA into the large ribosomal subunit, where it forms part of the central protuberance. This chain is Large ribosomal subunit protein uL18, found in Chlamydia muridarum (strain MoPn / Nigg).